Consider the following 203-residue polypeptide: dITP/XTP pyrophosphatase (203 aa).

7 to 12 is a substrate binding site; that stretch reads TGNRDK. The active-site Proton acceptor is aspartate 73. Residue aspartate 73 coordinates Mg(2+). Substrate-binding positions include serine 74, 155–158, lysine 178, and 183–184; these read FGYD and HR.

It belongs to the HAM1 NTPase family. As to quaternary structure, homodimer. The cofactor is Mg(2+).

It carries out the reaction XTP + H2O = XMP + diphosphate + H(+). The catalysed reaction is dITP + H2O = dIMP + diphosphate + H(+). It catalyses the reaction ITP + H2O = IMP + diphosphate + H(+). Pyrophosphatase that catalyzes the hydrolysis of nucleoside triphosphates to their monophosphate derivatives, with a high preference for the non-canonical purine nucleotides XTP (xanthosine triphosphate), dITP (deoxyinosine triphosphate) and ITP. Seems to function as a house-cleaning enzyme that removes non-canonical purine nucleotides from the nucleotide pool, thus preventing their incorporation into DNA/RNA and avoiding chromosomal lesions. This is dITP/XTP pyrophosphatase from Wolinella succinogenes (strain ATCC 29543 / DSM 1740 / CCUG 13145 / JCM 31913 / LMG 7466 / NCTC 11488 / FDC 602W) (Vibrio succinogenes).